The sequence spans 260 residues: Hydroxyethylthiazole kinase (260 aa).

Met-38 provides a ligand contact to substrate. The ATP site is built by Arg-114 and Thr-159. Residue Gly-186 coordinates substrate.

Belongs to the Thz kinase family. Mg(2+) serves as cofactor.

The catalysed reaction is 5-(2-hydroxyethyl)-4-methylthiazole + ATP = 4-methyl-5-(2-phosphooxyethyl)-thiazole + ADP + H(+). It functions in the pathway cofactor biosynthesis; thiamine diphosphate biosynthesis; 4-methyl-5-(2-phosphoethyl)-thiazole from 5-(2-hydroxyethyl)-4-methylthiazole: step 1/1. In terms of biological role, catalyzes the phosphorylation of the hydroxyl group of 4-methyl-5-beta-hydroxyethylthiazole (THZ). The sequence is that of Hydroxyethylthiazole kinase from Helicobacter pylori (strain G27).